Reading from the N-terminus, the 760-residue chain is Serine/threonine-protein kinase Haspin homolog ALK1 (760 aa).

Phosphoserine occurs at positions 76 and 79. Disordered regions lie at residues 76-100 (SDASLNVTTGNNTSRKTTSNSKKRW), 123-153 (SSFTSESHKDRESRNVLQQKRKSLQSYSSLD), 187-264 (DDIS…STVS), and 362-408 (KRNS…CSYS). Polar residues predominate over residues 78–95 (ASLNVTTGNNTSRKTTSN). A KEN box motif is present at residues 200–202 (KEN). The span at 209–220 (KKNSSIASTSSE) shows a compositional bias: polar residues. A D box motif is present at residues 224–232 (RTPLKPLVN). A compositionally biased stretch (polar residues) spans 237–250 (PTSQPQQQQPLYNA). Positions 251 to 264 (SLSSRRSSISSTVS) are enriched in low complexity. Positions 362–386 (KRNSQSSLKHKSSHASLQKFKRNKG) are enriched in basic residues. Low complexity predominate over residues 398–408 (NSSNDDSCSYS). One can recognise a Protein kinase domain in the interval 468 to 760 (NCDIKRILNP…NTGDLLKLYK (293 aa)). ATP contacts are provided by residues 474 to 482 (ILNPAKGDV) and Lys-510.

The protein belongs to the protein kinase superfamily. Ser/Thr protein kinase family. Haspin subfamily. In terms of processing, periodically phosphorylated during the cell cycle with a phosphorylation peak during mitosis and hyperphosphorylated after DNA damage.

The catalysed reaction is L-seryl-[protein] + ATP = O-phospho-L-seryl-[protein] + ADP + H(+). The enzyme catalyses L-threonyl-[protein] + ATP = O-phospho-L-threonyl-[protein] + ADP + H(+). Functionally, serine/threonine haspin-like protein kinase involved in cell cycle regulation. The protein is Serine/threonine-protein kinase Haspin homolog ALK1 (ALK1) of Saccharomyces cerevisiae (strain ATCC 204508 / S288c) (Baker's yeast).